A 365-amino-acid polypeptide reads, in one-letter code: Phospho-N-acetylmuramoyl-pentapeptide-transferase (365 aa).

10 consecutive transmembrane segments (helical) span residues 22-42, 74-94, 95-115, 134-154, 168-188, 201-221, 240-260, 267-287, 292-312, and 342-362; these read YISV…LALG, TMGG…WGDL, TSIY…IGFF, KFAL…YLLS, SLYI…IING, GLAI…AYIE, LAEV…FLWF, VFMG…IAVM, LIFF…MLQV, and KVVI…LAAI.

It belongs to the glycosyltransferase 4 family. MraY subfamily. The cofactor is Mg(2+).

The protein localises to the cell inner membrane. The enzyme catalyses UDP-N-acetyl-alpha-D-muramoyl-L-alanyl-gamma-D-glutamyl-meso-2,6-diaminopimeloyl-D-alanyl-D-alanine + di-trans,octa-cis-undecaprenyl phosphate = di-trans,octa-cis-undecaprenyl diphospho-N-acetyl-alpha-D-muramoyl-L-alanyl-D-glutamyl-meso-2,6-diaminopimeloyl-D-alanyl-D-alanine + UMP. Its pathway is cell wall biogenesis; peptidoglycan biosynthesis. Its function is as follows. Catalyzes the initial step of the lipid cycle reactions in the biosynthesis of the cell wall peptidoglycan: transfers peptidoglycan precursor phospho-MurNAc-pentapeptide from UDP-MurNAc-pentapeptide onto the lipid carrier undecaprenyl phosphate, yielding undecaprenyl-pyrophosphoryl-MurNAc-pentapeptide, known as lipid I. The sequence is that of Phospho-N-acetylmuramoyl-pentapeptide-transferase from Francisella tularensis subsp. novicida (strain U112).